A 253-amino-acid polypeptide reads, in one-letter code: GTP cyclohydrolase III 2 (253 aa).

The tract at residues 102-125 is disordered; sequence LRDAGSAQDENRQEALSHRSPPGF.

Belongs to the archaeal-type GTP cyclohydrolase family.

It carries out the reaction GTP + 3 H2O = 2-amino-5-formylamino-6-(5-phospho-D-ribosylamino)pyrimidin-4(3H)-one + 2 phosphate + 2 H(+). In terms of biological role, catalyzes the formation of 2-amino-5-formylamino-6-ribofuranosylamino-4(3H)-pyrimidinone ribonucleotide monophosphate and inorganic phosphate from GTP. Also has an independent pyrophosphate phosphohydrolase activity. The protein is GTP cyclohydrolase III 2 (gch32) of Halobacterium salinarum (strain ATCC 700922 / JCM 11081 / NRC-1) (Halobacterium halobium).